The following is a 154-amino-acid chain: uncharacterized protein (154 aa).

Coiled coils occupy residues 8-48 (DEEV…AIEA) and 89-138 (VQEL…RGLV).

This is an uncharacterized protein from Treponema pallidum (strain Nichols).